Consider the following 280-residue polypeptide: 4-diphosphocytidyl-2-C-methyl-D-erythritol kinase (280 aa).

K9 is a catalytic residue. Residue 92 to 102 (PMGGGLGGGSS) coordinates ATP. Residue D134 is part of the active site.

Belongs to the GHMP kinase family. IspE subfamily.

It carries out the reaction 4-CDP-2-C-methyl-D-erythritol + ATP = 4-CDP-2-C-methyl-D-erythritol 2-phosphate + ADP + H(+). Its pathway is isoprenoid biosynthesis; isopentenyl diphosphate biosynthesis via DXP pathway; isopentenyl diphosphate from 1-deoxy-D-xylulose 5-phosphate: step 3/6. In terms of biological role, catalyzes the phosphorylation of the position 2 hydroxy group of 4-diphosphocytidyl-2C-methyl-D-erythritol. This chain is 4-diphosphocytidyl-2-C-methyl-D-erythritol kinase, found in Nitrosococcus oceani (strain ATCC 19707 / BCRC 17464 / JCM 30415 / NCIMB 11848 / C-107).